The primary structure comprises 155 residues: Large ribosomal subunit protein eL19 (155 aa).

Basic residues predominate over residues 66-84 (VRHLQRRKGRRRGMGRRKG). The interval 66-85 (VRHLQRRKGRRRGMGRRKGV) is disordered.

Belongs to the eukaryotic ribosomal protein eL19 family. Part of the 50S ribosomal subunit.

Binds to the 23S rRNA. The polypeptide is Large ribosomal subunit protein eL19 (Aeropyrum pernix (strain ATCC 700893 / DSM 11879 / JCM 9820 / NBRC 100138 / K1)).